A 65-amino-acid polypeptide reads, in one-letter code: GVRDAYIADDKNCVYTCGSNSYCNTECTKNGAESGYCQWLGKYGNACWCIKLPDKVPIRIPGKCR.

In terms of domain architecture, LCN-type CS-alpha/beta spans 3 to 65; that stretch reads RDAYIADDKN…VPIRIPGKCR (63 aa). The interval 9–13 is specificity module, loop 1; it reads DDKNC. 4 disulfides stabilise this stretch: C13–C64, C17–C37, C23–C47, and C27–C49. Specificity module, loop regions lie at residues 40–44 and 57–65; these read LGKYG and PIRIPGKCR. R65 is subject to Arginine amide.

The protein belongs to the long (4 C-C) scorpion toxin superfamily. Sodium channel inhibitor family. Alpha subfamily. Post-translationally, the recombinant toxin which is used for activity tests is not amidated. However, C-terminal amidation does not appear to play an important role in activity, since the non-amidated recombinant toxin and the native toxin (which is amidated) show similar activities on all sodium channels tested. In terms of tissue distribution, expressed by the venom gland.

Its subcellular location is the secreted. In terms of biological role, alpha toxins bind voltage-independently at site-3 of sodium channels (Nav) and inhibit the inactivation of the activated channels, thereby blocking neuronal transmission. Both native and recombinant (non-amidated) toxins inhibit inactivation of Nav1.2/SCN2A (EC(50)=31.2-36.6 nM), Nav1.6/SCN8A (EC(50)=6.9-8.9 nM), and Nav1.7/SCN9A (EC(50)=182.0-260.1 nM). The protein is Alpha-toxin Lqq4 of Leiurus quinquestriatus quinquestriatus (Egyptian scorpion).